A 78-amino-acid chain; its full sequence is Small ribosomal subunit protein bS20 (78 aa).

Belongs to the bacterial ribosomal protein bS20 family.

Its function is as follows. Binds directly to 16S ribosomal RNA. The protein is Small ribosomal subunit protein bS20 of Streptococcus pneumoniae serotype 2 (strain D39 / NCTC 7466).